The following is a 401-amino-acid chain: Probable cysteine desulfurase (401 aa).

At K223 the chain carries N6-(pyridoxal phosphate)lysine.

The protein belongs to the class-V pyridoxal-phosphate-dependent aminotransferase family. Csd subfamily. Pyridoxal 5'-phosphate is required as a cofactor.

The catalysed reaction is (sulfur carrier)-H + L-cysteine = (sulfur carrier)-SH + L-alanine. In terms of biological role, catalyzes the removal of elemental sulfur and selenium atoms from L-cysteine, L-cystine, L-selenocysteine, and L-selenocystine to produce L-alanine. The polypeptide is Probable cysteine desulfurase (csdA) (Pseudomonas putida (strain ATCC 47054 / DSM 6125 / CFBP 8728 / NCIMB 11950 / KT2440)).